Here is a 241-residue protein sequence, read N- to C-terminus: Small ribosomal subunit protein uS2 (241 aa).

The protein belongs to the universal ribosomal protein uS2 family.

This chain is Small ribosomal subunit protein uS2, found in Glaesserella parasuis serovar 5 (strain SH0165) (Haemophilus parasuis).